The chain runs to 845 residues: Protein translocase subunit SecA 1 (845 aa).

Residues Gln85, 103 to 107 (GEGKT), and Asp492 each bind ATP.

Belongs to the SecA family. As to quaternary structure, monomer and homodimer. Part of the essential Sec protein translocation apparatus which comprises SecA, SecYEG and auxiliary proteins SecDF. Other proteins may also be involved.

Its subcellular location is the cell membrane. The protein localises to the cytoplasm. The catalysed reaction is ATP + H2O + cellular proteinSide 1 = ADP + phosphate + cellular proteinSide 2.. Functionally, part of the Sec protein translocase complex. Interacts with the SecYEG preprotein conducting channel. Has a central role in coupling the hydrolysis of ATP to the transfer of proteins into and across the cell membrane, serving as an ATP-driven molecular motor driving the stepwise translocation of polypeptide chains across the membrane. In Corynebacterium glutamicum (strain ATCC 13032 / DSM 20300 / JCM 1318 / BCRC 11384 / CCUG 27702 / LMG 3730 / NBRC 12168 / NCIMB 10025 / NRRL B-2784 / 534), this protein is Protein translocase subunit SecA 1.